A 407-amino-acid polypeptide reads, in one-letter code: PWWP domain-containing protein 3 (407 aa).

A disordered region spans residues 1–46; it reads MMVARTRSQKRKLEEINNQKKIKTKKKATGQQTSNTKNLRDVKKKG. The PWWP domain occupies 63–129; that stretch reads NGEYVLAKMS…SSNVLPLTVD (67 aa). Phosphoserine occurs at positions 160 and 162. The segment at 163–248 is disordered; the sequence is DVEEDEFEPE…PIPSPKKTAK (86 aa). Positions 172–208 are enriched in basic and acidic residues; sequence ENTRKKLQKPIEKPKKEKIEATPKIDGGKRLKNEKSS. Phosphoserine occurs at positions 236, 238, and 242.

As to quaternary structure, component of the mst2 complex composed of at least eaf6, mst2, nto1, pdp3, ptf1, ptf2 and tfg3.

It localises to the nucleus. In terms of biological role, component of the mst2 complex which is a highly specific H3 lysine 14 (H3K14) acetyltransferase that functions together with gcn5 to regulate global levels of H3K14 acetylation (H3K14ac), critical for DNA damage checkpoint activation. The sequence is that of PWWP domain-containing protein 3 (pdp3) from Schizosaccharomyces pombe (strain 972 / ATCC 24843) (Fission yeast).